The sequence spans 867 residues: Nuclear body protein SP140 (867 aa).

Residues 22–138 form the HSR domain; it reads VAEIQNVEGQ…IYRSFQNVCY (117 aa). Disordered regions lie at residues 260-341, 365-432, and 486-580; these read TYST…EEPQ, TPQV…SEEL, and IANN…KHKD. Residues 268 to 301 are compositionally biased toward basic and acidic residues; it reads KQGEEEGRNSPRKRNQDKEKYQESPEGRDKETFD. 2 stretches are compositionally biased toward acidic residues: residues 323 to 341 and 384 to 397; these read EGEEGSDDCSEMCDGEEPQ and EGEEGSDDCSEMCD. Residues 404–416 show a composition bias toward low complexity; sequence ASSSLARRGSVSS. Basic residues-rich tracts occupy residues 494–512 and 567–577; these read KPKRKRRKKRGHGWSRMRM and QKRVRSRASRK. The Nuclear localization signal motif lies at 495–514; sequence PKRKRRKKRGHGWSRMRMRR. In terms of domain architecture, SAND spans 580-661; the sequence is DETVDFKAPL…RWLMENGFLP (82 aa). A PHD-type zinc finger spans residues 690 to 736; it reads LDECEVCRDGGELFCCDTCSRVFHEDCHIPPVEAERTPWNCIFCRMK. Position 726 is a phosphothreonine (threonine 726). One can recognise a Bromo domain in the interval 754–857; it reads QMCPEEQLKC…AEFEKNFKEV (104 aa).

In terms of assembly, interacts with PIN1. Post-translationally, phosphorylation at Thr-726 promotes binding of PIN1 and subsequent isomerization of Pro-727. High levels in spleen and peripheral blood leukocytes, much lower levels in tonsils, thymus, prostate, ovary, small intestine, and colon. Very low levels in heart, brain, placenta, lung, liver, skeletal muscle, kidney, and pancreas. Not detected in brain, liver and muscle.

It localises to the nucleus. The protein localises to the PML body. The protein resides in the cytoplasm. Its function is as follows. Component of the nuclear body, also known as nuclear domain 10, PML oncogenic domain, and KR body. May be involved in the pathogenesis of acute promyelocytic leukemia and viral infection. May play a role in chromatin-mediated regulation of gene expression although it does not bind to histone H3 tails. The polypeptide is Nuclear body protein SP140 (Homo sapiens (Human)).